The following is a 455-amino-acid chain: MLPSTIVEILCSKTAQADVHVGGWIRTRRNAKGFVFLELNDGSCLKNIQCIINEGSAAWDMLDGVNTGACVSVYGKLVPSPGRGQDWEIQVEKMVVHGLAAPEVFPLQKKRHSDEFLRTIAHLRVRTNKYGAIFRIRAEAAQAIHNYFYKKGFYYIHTPILTGSDCEGAGEMFRVTTAHSSNDSQSSDNFFGKECSLTVSGQLEAECLAMGLGKVYTFGPTFRAENSNTPRHAAEFWMVEPEMAFADLQDNMNLAEELTCEVIRKVLQCHIDDIMLLDKYVQPGLIKALENIIAKPFIRCSYHDAITILLSSHKDFEFPVTFGLDLQSEHEKYLTEEYFKHPVIIFDYPKEIKAFYMRQNDDEETVAAMDLLVPRIGELIGGSQREERLDNLLSRIRELGQSIEEYWWYLDLRRFGTVPHAGFGLGFERLVMLLTGVSNIRDVLPFPRTPGYLEF.

The protein belongs to the class-II aminoacyl-tRNA synthetase family. In terms of assembly, homodimer.

It localises to the cytoplasm. The enzyme catalyses tRNA(Asn) + L-asparagine + ATP = L-asparaginyl-tRNA(Asn) + AMP + diphosphate + H(+). The chain is Asparagine--tRNA ligase from Lawsonia intracellularis (strain PHE/MN1-00).